Reading from the N-terminus, the 465-residue chain is Ribosomal oxygenase 2 (465 aa).

The 133-residue stretch at 139-271 (QPQRFKDELW…NSWGDFLLDT (133 aa)) folds into the JmjC domain. Fe cation-binding residues include histidine 179, aspartate 181, and histidine 240. The residue at position 309 (serine 309) is a Phosphoserine.

Belongs to the ROX family. MINA53 subfamily. Requires Fe(2+) as cofactor. As to expression, expressed in liver, skeletal muscle, heart, pancreas, and placenta. Not detected in brain, lung or kidney. Expressed in several lung cancer tissues, but is barely detected in the adjacent non-cancerous tissues. Also highly expressed in several esophageal squamous cell carcinoma (ESCC), and colon cancer tissues, and in various cancer cell lines.

The protein localises to the nucleus. It is found in the nucleolus. The catalysed reaction is L-histidyl-[protein] + 2-oxoglutarate + O2 = (3S)-3-hydroxy-L-histidyl-[protein] + succinate + CO2. The enzyme catalyses L-histidyl-[ribosomal protein uL15] + 2-oxoglutarate + O2 = (3S)-3-hydroxy-L-histidyl-[ribosomal protein uL15] + succinate + CO2. Functionally, oxygenase that can act as both a histone lysine demethylase and a ribosomal histidine hydroxylase. Is involved in the demethylation of trimethylated 'Lys-9' on histone H3 (H3K9me3), leading to an increase in ribosomal RNA expression. Also catalyzes the hydroxylation of 60S ribosomal protein L27a on 'His-39'. May play an important role in cell growth and survival. May be involved in ribosome biogenesis, most likely during the assembly process of pre-ribosomal particles. In Homo sapiens (Human), this protein is Ribosomal oxygenase 2.